The sequence spans 399 residues: Maltose excess protein 1-like, chloroplastic (399 aa).

The transit peptide at 1–67 (MSSSVSSVRL…RRRRYALPPV (67 aa)) directs the protein to the chloroplast. 9 consecutive transmembrane segments (helical) span residues 93 to 113 (FAGA…ILNA), 123 to 143 (ALFA…LSLL), 154 to 174 (AVIV…QLAM), 180 to 202 (LPQF…LNYF), 217 to 237 (ITIG…VPFI), 238 to 258 (PNSL…VVMA), 268 to 288 (INFV…WMPV), 306 to 326 (AFTM…AVFI), and 361 to 381 (FLAT…RDTI).

The protein resides in the plastid. Its subcellular location is the chloroplast inner membrane. Its function is as follows. Probable maltose transporter. Essential for the conversion of starch to sucrose in leaves at night, probably via the export of maltose from the chloroplast. This is Maltose excess protein 1-like, chloroplastic from Oryza sativa subsp. japonica (Rice).